The primary structure comprises 86 residues: MKAFSVAVVLVIACMFILESTAVPFSEVRTEEVGSFDSPVGEHQQPGGESMHLPEPFRFKRQIHLSLCGLCCNCCHNIGCGFCCKF.

The signal sequence occupies residues 1-22; that stretch reads MKAFSVAVVLVIACMFILESTA. Positions 23–59 are excised as a propeptide; the sequence is VPFSEVRTEEVGSFDSPVGEHQQPGGESMHLPEPFRF. 4 disulfide bridges follow: Cys-68–Cys-84, Cys-71–Cys-74, Cys-72–Cys-80, and Cys-75–Cys-83.

It belongs to the hepcidin family.

The protein localises to the secreted. Functionally, seems to act as a signaling molecule involved in the maintenance of iron homeostasis. Seems to be required in conjunction with HFE to regulate both intestinal iron absorption and iron storage in macrophages. May also have antimicrobial activity. The protein is Hepcidin-1 (hamp1) of Salmo salar (Atlantic salmon).